The following is a 207-amino-acid chain: Cytochrome c biogenesis ATP-binding export protein CcmA (207 aa).

In terms of domain architecture, ABC transporter spans 4–207 (LEARELLCER…RISLTQTRAA (204 aa)). 36–43 (GSNGAGKT) serves as a coordination point for ATP.

The protein belongs to the ABC transporter superfamily. CcmA exporter (TC 3.A.1.107) family. The complex is composed of two ATP-binding proteins (CcmA) and two transmembrane proteins (CcmB).

It is found in the cell inner membrane. It catalyses the reaction heme b(in) + ATP + H2O = heme b(out) + ADP + phosphate + H(+). Functionally, part of the ABC transporter complex CcmAB involved in the biogenesis of c-type cytochromes; once thought to export heme, this seems not to be the case, but its exact role is uncertain. Responsible for energy coupling to the transport system. This is Cytochrome c biogenesis ATP-binding export protein CcmA from Shigella boydii serotype 4 (strain Sb227).